A 517-amino-acid chain; its full sequence is Maturase K (517 aa).

This sequence belongs to the intron maturase 2 family. MatK subfamily.

It localises to the plastid. It is found in the chloroplast. Its function is as follows. Usually encoded in the trnK tRNA gene intron. Probably assists in splicing its own and other chloroplast group II introns. This Paris tetraphylla protein is Maturase K.